Consider the following 156-residue polypeptide: UPF0178 protein Jann_2168 (156 aa).

It belongs to the UPF0178 family.

The sequence is that of UPF0178 protein Jann_2168 from Jannaschia sp. (strain CCS1).